We begin with the raw amino-acid sequence, 454 residues long: tRNA modification GTPase MnmE (454 aa).

3 residues coordinate (6S)-5-formyl-5,6,7,8-tetrahydrofolate: Arg23, Glu80, and Lys120. A TrmE-type G domain is found at 216 to 377; sequence GMKVVIAGRP…LRNHLKQSMG (162 aa). A K(+)-binding site is contributed by Asn226. Residues 226–231, 245–251, 270–273, and 335–338 each bind GTP; these read NAGKSS, TDIAGTT, DTAG, and NKAD. Ser230 contributes to the Mg(2+) binding site. Thr245, Ile247, and Thr250 together coordinate K(+). Thr251 provides a ligand contact to Mg(2+). A (6S)-5-formyl-5,6,7,8-tetrahydrofolate-binding site is contributed by Lys454.

Belongs to the TRAFAC class TrmE-Era-EngA-EngB-Septin-like GTPase superfamily. TrmE GTPase family. As to quaternary structure, homodimer. Heterotetramer of two MnmE and two MnmG subunits. K(+) serves as cofactor.

It localises to the cytoplasm. Functionally, exhibits a very high intrinsic GTPase hydrolysis rate. Involved in the addition of a carboxymethylaminomethyl (cmnm) group at the wobble position (U34) of certain tRNAs, forming tRNA-cmnm(5)s(2)U34. The sequence is that of tRNA modification GTPase MnmE from Escherichia coli O157:H7.